Consider the following 399-residue polypeptide: Elongation factor Tu 1 (399 aa).

Residues 17–208 (KPHVNVGTIG…LDDYVEVPPR (192 aa)) enclose the tr-type G domain. Residues 26 to 33 (GHVDHGKT) form a G1 region. 26 to 33 (GHVDHGKT) is a GTP binding site. Mg(2+) is bound at residue Thr33. Residues 62 to 66 (GITIA) form a G2 region. Residues 83 to 86 (DCPG) form a G3 region. GTP-binding positions include 83 to 87 (DCPGH) and 138 to 141 (NKAD). The segment at 138–141 (NKAD) is G4. The tract at residues 175 to 177 (SAL) is G5.

The protein belongs to the TRAFAC class translation factor GTPase superfamily. Classic translation factor GTPase family. EF-Tu/EF-1A subfamily. Monomer.

The protein resides in the cytoplasm. It carries out the reaction GTP + H2O = GDP + phosphate + H(+). In terms of biological role, GTP hydrolase that promotes the GTP-dependent binding of aminoacyl-tRNA to the A-site of ribosomes during protein biosynthesis. In Wolbachia sp. subsp. Brugia malayi (strain TRS), this protein is Elongation factor Tu 1.